Reading from the N-terminus, the 363-residue chain is Homeobox protein Hox-A2a (363 aa).

Disordered stretches follow at residues 30 to 88, 98 to 117, 189 to 220, and 268 to 308; these read DSFQ…LPPE, SKRN…GPVC, RMKH…SDEE, and DKNL…LDVS. Residues 31–44 show a composition bias toward polar residues; it reads SFQSSSIKSSTLSR. The Antp-type hexapeptide signature appears at 88–93; the sequence is EYPWMR. Polar residues predominate over residues 103-113; it reads LPNSTTTTISN. A DNA-binding region (homeobox) is located at residues 137 to 196; sequence SRRLRTAYTNTQLLELEKEFHFNKYLCRPRRVEIAALLDLTERQVKVWFQNRRMKHKRQT.

The protein belongs to the Antp homeobox family. Proboscipedia subfamily.

It is found in the nucleus. Its function is as follows. Sequence-specific transcription factor which is part of a developmental regulatory system that provides cells with specific positional identities on the anterior-posterior axis. The polypeptide is Homeobox protein Hox-A2a (hoxa2a) (Takifugu rubripes (Japanese pufferfish)).